The sequence spans 189 residues: Elongation factor P (189 aa).

At lysine 34 the chain carries N6-(3,6-diaminohexanoyl)-5-hydroxylysine.

This sequence belongs to the elongation factor P family. Post-translationally, may be beta-lysylated on the epsilon-amino group of Lys-34 by the combined action of EpmA and EpmB, and then hydroxylated on the C5 position of the same residue by EpmC (if this protein is present). Lysylation is critical for the stimulatory effect of EF-P on peptide-bond formation. The lysylation moiety may extend toward the peptidyltransferase center and stabilize the terminal 3-CCA end of the tRNA. Hydroxylation of the C5 position on Lys-34 may allow additional potential stabilizing hydrogen-bond interactions with the P-tRNA.

It localises to the cytoplasm. It functions in the pathway protein biosynthesis; polypeptide chain elongation. In terms of biological role, involved in peptide bond synthesis. Alleviates ribosome stalling that occurs when 3 or more consecutive Pro residues or the sequence PPG is present in a protein, possibly by augmenting the peptidyl transferase activity of the ribosome. Modification of Lys-34 is required for alleviation. This chain is Elongation factor P, found in Buchnera aphidicola subsp. Baizongia pistaciae (strain Bp).